A 324-amino-acid chain; its full sequence is Galactosylgalactosylxylosylprotein 3-beta-glucuronosyltransferase 2 (324 aa).

Residues 1–2 (MK) are Cytoplasmic-facing. A helical; Signal-anchor for type II membrane protein membrane pass occupies residues 3–23 (SALCSRFFILLPWILIVIIML). The Lumenal segment spans residues 24 to 324 (DVDPRRPAPQ…YHLDTVNIEV (301 aa)). Residues 50–78 (SRVPLRRSSPGRDAAEKRNESRPQLQPEP) are disordered. N-linked (GlcNAc...) asparagine glycosylation is present at Asn-68. UDP-alpha-D-glucuronate contacts are provided by residues 88 to 90 (PTY), Asp-119, Arg-156, Arg-161, and 186 to 188 (DDD). Asp-188 lines the Mn(2+) pocket. Residues 235–244 (WREDRPFAID) form an interaction with galactose moiety of substrate glycoprotein region. The Proton donor/acceptor role is filled by Glu-274. Asn-293 carries an N-linked (GlcNAc...) asparagine glycan. Residue 301-303 (HTR) coordinates UDP-alpha-D-glucuronate.

This sequence belongs to the glycosyltransferase 43 family. In terms of assembly, homodimer. It depends on Mn(2+) as a cofactor. Expressed in brain, but not in liver and kidney.

It is found in the golgi apparatus membrane. It catalyses the reaction 3-O-(beta-D-galactosyl-(1-&gt;3)-beta-D-galactosyl-(1-&gt;4)-beta-D-xylosyl)-L-seryl-[protein] + UDP-alpha-D-glucuronate = 3-O-(beta-D-GlcA-(1-&gt;3)-beta-D-Gal-(1-&gt;3)-beta-D-Gal-(1-&gt;4)-beta-D-Xyl)-L-seryl-[protein] + UDP + H(+). It participates in protein modification; protein glycosylation. Involved in the biosynthesis of L2/HNK-1 carbohydrate epitope on both glycolipids and glycoproteins. This chain is Galactosylgalactosylxylosylprotein 3-beta-glucuronosyltransferase 2 (B3gat2), found in Mus musculus (Mouse).